We begin with the raw amino-acid sequence, 524 residues long: DNA damage-binding protein CMR1 (524 aa).

The segment at 35 to 79 (EKIIPKPAPPKPKRASAPRAKREPVKRETARPTRQSSRLAGLDAD) is disordered. A compositionally biased stretch (basic and acidic residues) spans 54 to 65 (AKREPVKRETAR). WD repeat units lie at residues 184–225 (LVPQ…VKAE), 245–285 (THSR…STEA), 295–332 (LPISAIDMPTSDPNMIIFSTLQGTLGRHDLRTKSSTAE), 336–376 (LTDQ…GKGD), 385–425 (THDS…KWTA), 447–490 (GRWV…LAQL), and 493–524 (DGITAVPAVAHFHPTMDWVAGGNGSGKLCLWM).

It belongs to the WD repeat DDB2/WDR76 family.

In terms of biological role, DNA-binding protein that binds to both single- and double-stranded DNA. Binds preferentially to UV-damaged DNA. May be involved in DNA-metabolic processes. This chain is DNA damage-binding protein CMR1, found in Chaetomium globosum (strain ATCC 6205 / CBS 148.51 / DSM 1962 / NBRC 6347 / NRRL 1970) (Soil fungus).